Reading from the N-terminus, the 301-residue chain is Ornithine carbamoyltransferase (301 aa).

Residues 53-56, Gln80, Arg104, and 131-134 each bind carbamoyl phosphate; these read STRT and HPCQ. Residues Asn162, Asp221, and 225–226 contribute to the L-ornithine site; that span reads SI. Carbamoyl phosphate contacts are provided by residues 260–261 and Arg288; that span reads CL.

It belongs to the aspartate/ornithine carbamoyltransferase superfamily. OTCase family.

It localises to the cytoplasm. The catalysed reaction is carbamoyl phosphate + L-ornithine = L-citrulline + phosphate + H(+). It functions in the pathway amino-acid biosynthesis; L-arginine biosynthesis; L-arginine from L-ornithine and carbamoyl phosphate: step 1/3. Functionally, reversibly catalyzes the transfer of the carbamoyl group from carbamoyl phosphate (CP) to the N(epsilon) atom of ornithine (ORN) to produce L-citrulline. This is Ornithine carbamoyltransferase from Cenarchaeum symbiosum (strain A).